The following is a 125-amino-acid chain: Large ribosomal subunit protein bL12 (125 aa).

This sequence belongs to the bacterial ribosomal protein bL12 family. Homodimer. Part of the ribosomal stalk of the 50S ribosomal subunit. Forms a multimeric L10(L12)X complex, where L10 forms an elongated spine to which 2 to 4 L12 dimers bind in a sequential fashion. Binds GTP-bound translation factors.

Its function is as follows. Forms part of the ribosomal stalk which helps the ribosome interact with GTP-bound translation factors. Is thus essential for accurate translation. The chain is Large ribosomal subunit protein bL12 from Ruthia magnifica subsp. Calyptogena magnifica.